Here is a 520-residue protein sequence, read N- to C-terminus: Chaperone Ric-8B (520 aa).

Residue Ser468 is modified to Phosphoserine. Thr473 carries the post-translational modification Phosphothreonine.

This sequence belongs to the synembryn family. As to quaternary structure, interacts with GDP-bound G(s) G-alpha proteins GNAL and GNAS. Does not interact with G-alpha proteins when they are in complex with subunits beta and gamma. In terms of tissue distribution, predominantly expressed in the mature olfactory sensory neurons and also in a few regions in the brain.

The protein localises to the cytoplasm. It localises to the cell cortex. In terms of biological role, chaperone that specifically binds and folds nascent G(s) G-alpha proteins (GNAS and GNAL) prior to G protein heterotrimer formation, promoting their association with the plasma membrane. Also acts as a guanine nucleotide exchange factor (GEF) for G(s) proteins by stimulating exchange of bound GDP for free GTP. Acts as an important component for odorant signal transduction by mediating GNAL (G(olf)-alpha) folding, thereby promoting-dependent cAMP accumulation in olfactory sensory neurons. The polypeptide is Chaperone Ric-8B (Mus musculus (Mouse)).